The chain runs to 118 residues: Large ribosomal subunit protein uL24c (118 aa).

The protein belongs to the universal ribosomal protein uL24 family. Part of the 50S ribosomal subunit.

The protein resides in the plastid. It is found in the organellar chromatophore. Functionally, one of two assembly initiator proteins, it binds directly to the 5'-end of the 23S rRNA, where it nucleates assembly of the 50S subunit. The polypeptide is Large ribosomal subunit protein uL24c (rpl24) (Paulinella chromatophora).